The primary structure comprises 218 residues: Alkylmercury lyase (218 aa).

It belongs to the MerB family.

It carries out the reaction an alkylmercury + H(+) = an alkane + Hg(2+). In terms of biological role, cleaves the carbon-mercury bond of organomercurials such as phenylmercuric acetate. One product is Hg(2+), which is subsequently detoxified by the mercuric reductase. The sequence is that of Alkylmercury lyase (merB1) from Bacillus cereus.